The sequence spans 170 residues: ATP synthase subunit b (170 aa).

The chain crosses the membrane as a helical span at residues 11 to 31; sequence AFTFGDAFFTLFAFAILLVLI.

Belongs to the ATPase B chain family. F-type ATPases have 2 components, F(1) - the catalytic core - and F(0) - the membrane proton channel. F(1) has five subunits: alpha(3), beta(3), gamma(1), delta(1), epsilon(1). F(0) has three main subunits: a(1), b(2) and c(10-14). The alpha and beta chains form an alternating ring which encloses part of the gamma chain. F(1) is attached to F(0) by a central stalk formed by the gamma and epsilon chains, while a peripheral stalk is formed by the delta and b chains.

It localises to the cell membrane. F(1)F(0) ATP synthase produces ATP from ADP in the presence of a proton or sodium gradient. F-type ATPases consist of two structural domains, F(1) containing the extramembraneous catalytic core and F(0) containing the membrane proton channel, linked together by a central stalk and a peripheral stalk. During catalysis, ATP synthesis in the catalytic domain of F(1) is coupled via a rotary mechanism of the central stalk subunits to proton translocation. In terms of biological role, component of the F(0) channel, it forms part of the peripheral stalk, linking F(1) to F(0). This is ATP synthase subunit b from Listeria welshimeri serovar 6b (strain ATCC 35897 / DSM 20650 / CCUG 15529 / CIP 8149 / NCTC 11857 / SLCC 5334 / V8).